The sequence spans 493 residues: Probable cytosol aminopeptidase (493 aa).

Residues Lys-257 and Asp-262 each coordinate Mn(2+). The active site involves Lys-269. 3 residues coordinate Mn(2+): Asp-280, Asp-339, and Glu-341. The active site involves Arg-343.

This sequence belongs to the peptidase M17 family. The cofactor is Mn(2+).

It is found in the cytoplasm. The catalysed reaction is Release of an N-terminal amino acid, Xaa-|-Yaa-, in which Xaa is preferably Leu, but may be other amino acids including Pro although not Arg or Lys, and Yaa may be Pro. Amino acid amides and methyl esters are also readily hydrolyzed, but rates on arylamides are exceedingly low.. The enzyme catalyses Release of an N-terminal amino acid, preferentially leucine, but not glutamic or aspartic acids.. Its function is as follows. Presumably involved in the processing and regular turnover of intracellular proteins. Catalyzes the removal of unsubstituted N-terminal amino acids from various peptides. The chain is Probable cytosol aminopeptidase (pepA) from Aquifex aeolicus (strain VF5).